We begin with the raw amino-acid sequence, 116 residues long: Aspartate 1-decarboxylase (116 aa).

Ser25 acts as the Schiff-base intermediate with substrate; via pyruvic acid in catalysis. A Pyruvic acid (Ser) modification is found at Ser25. Thr57 is a binding site for substrate. Residue Tyr58 is the Proton donor of the active site. 73 to 75 serves as a coordination point for substrate; that stretch reads GAA.

This sequence belongs to the PanD family. As to quaternary structure, heterooctamer of four alpha and four beta subunits. It depends on pyruvate as a cofactor. Post-translationally, is synthesized initially as an inactive proenzyme, which is activated by self-cleavage at a specific serine bond to produce a beta-subunit with a hydroxyl group at its C-terminus and an alpha-subunit with a pyruvoyl group at its N-terminus.

It is found in the cytoplasm. It carries out the reaction L-aspartate + H(+) = beta-alanine + CO2. It functions in the pathway cofactor biosynthesis; (R)-pantothenate biosynthesis; beta-alanine from L-aspartate: step 1/1. Catalyzes the pyruvoyl-dependent decarboxylation of aspartate to produce beta-alanine. The protein is Aspartate 1-decarboxylase of Leptospira borgpetersenii serovar Hardjo-bovis (strain JB197).